Consider the following 262-residue polypeptide: Tritrans,polycis-undecaprenyl-diphosphate synthase (GGDP specific) (262 aa).

Asp-40 is an active-site residue. Asp-40 contacts Mg(2+). Substrate contacts are provided by residues 41-44 (GNRR), Trp-45, and 85-87 (SAE). The active-site Proton acceptor is Asn-88. Substrate contacts are provided by residues Arg-92, Arg-211, and 217-219 (RIS). Glu-230 provides a ligand contact to Mg(2+).

This sequence belongs to the UPP synthase family. Homodimer. Requires Mg(2+) as cofactor.

It carries out the reaction geranylgeranyl diphosphate + 7 isopentenyl diphosphate = tri-trans,hepta-cis-undecaprenyl diphosphate + 7 diphosphate. In terms of biological role, generates tritrans,heptacis-undecaprenyl diphosphate from isopentenyl pyrophosphate (IPP) and geranylgeranyl diphosphate. It is probably the precursor of glycosyl carrier lipids. This chain is Tritrans,polycis-undecaprenyl-diphosphate synthase (GGDP specific) (uppS), found in Sulfolobus acidocaldarius (strain ATCC 33909 / DSM 639 / JCM 8929 / NBRC 15157 / NCIMB 11770).